The sequence spans 260 residues: HTH-type transcriptional repressor NanR (260 aa).

The interval 1-22 (MNAFDSQAEDSPTSLGRSLRRR) is disordered. The HTH gntR-type domain occupies 27–95 (KKLSEMVEEE…NGERARVSRP (69 aa)). A DNA-binding region (H-T-H motif) is located at residues 55-74 (ERELMAFFNVGRPSVREALA).

Belongs to the NanR family.

Transcriptional repressor that controls expression of the genes required for the catabolism of sialic acids. In Salmonella newport (strain SL254), this protein is HTH-type transcriptional repressor NanR.